Here is a 102-residue protein sequence, read N- to C-terminus: Monothiol glutaredoxin-S9 (102 aa).

The Glutaredoxin domain occupies 1–101 (MDKVVRMSSE…PLVKPFQANL (101 aa)). C21 is a binding site for [2Fe-2S] cluster.

Belongs to the glutaredoxin family. CC-type subfamily.

It is found in the cytoplasm. May only reduce GSH-thiol disulfides, but not protein disulfides. The protein is Monothiol glutaredoxin-S9 (GRXS9) of Arabidopsis thaliana (Mouse-ear cress).